The following is a 255-amino-acid chain: Probable ubiquitin carboxyl-terminal hydrolase (255 aa).

Residues 13–237 (NWIPLEANPE…IRFNLMGLVK (225 aa)) enclose the UCH catalytic domain. An interaction with ubiquitin region spans residues 16–21 (PLEANP). Cys103 (nucleophile) is an active-site residue. His177 functions as the Proton donor in the catalytic mechanism. Positions 227-232 (EIRFNL) are interaction with ubiquitin. Residues 235-255 (LVKKPNEESEEEEEKEKEETK) form a disordered region. Positions 242 to 255 (ESEEEEEKEKEETK) are enriched in acidic residues.

It belongs to the peptidase C12 family.

It localises to the cytoplasm. It catalyses the reaction Thiol-dependent hydrolysis of ester, thioester, amide, peptide and isopeptide bonds formed by the C-terminal Gly of ubiquitin (a 76-residue protein attached to proteins as an intracellular targeting signal).. Its function is as follows. Ubiquitin-protein hydrolase is involved both in the processing of ubiquitin precursors and of ubiquitinated proteins. This enzyme is a thiol protease that recognizes and hydrolyzes a peptide bond at the C-terminal glycine of either ubiquitin or nedd8. The polypeptide is Probable ubiquitin carboxyl-terminal hydrolase (uch1) (Dictyostelium discoideum (Social amoeba)).